The following is a 229-amino-acid chain: Heptaprenylglyceryl phosphate synthase (229 aa).

Residue lysine 12 coordinates sn-glycerol 1-phosphate. 2 residues coordinate Mg(2+): aspartate 14 and serine 40. Residues 159–164, glycine 189, and 209–210 each bind sn-glycerol 1-phosphate; these read YLEYSG and GN.

This sequence belongs to the GGGP/HepGP synthase family. Group I subfamily. Homodimer. Requires Mg(2+) as cofactor.

The catalysed reaction is sn-glycerol 1-phosphate + all-trans-heptaprenyl diphosphate = 3-heptaprenyl-sn-glycero-1-phosphate + diphosphate. Its pathway is membrane lipid metabolism; glycerophospholipid metabolism. Prenyltransferase that catalyzes in vivo the transfer of the heptaprenyl moiety of heptaprenyl pyrophosphate (HepPP; 35 carbon atoms) to the C3 hydroxyl of sn-glycerol-1-phosphate (G1P), producing heptaprenylglyceryl phosphate (HepGP). This reaction is an ether-bond-formation step in the biosynthesis of archaea-type G1P-based membrane lipids found in Bacillales. The chain is Heptaprenylglyceryl phosphate synthase from Bacillus cereus (strain AH187).